A 743-amino-acid polypeptide reads, in one-letter code: Phosphoribosylformylglycinamidine synthase subunit PurL (743 aa).

H50 is a catalytic residue. The ATP site is built by Y53 and K92. E94 provides a ligand contact to Mg(2+). Residues 95–98 (SHNH) and R117 contribute to the substrate site. H96 functions as the Proton acceptor in the catalytic mechanism. Residue D118 coordinates Mg(2+). Residue Q241 participates in substrate binding. D269 serves as a coordination point for Mg(2+). 313-315 (ESQ) lines the substrate pocket. ATP-binding residues include D494 and G531. N532 contacts Mg(2+). S534 provides a ligand contact to substrate.

It belongs to the FGAMS family. As to quaternary structure, monomer. Part of the FGAM synthase complex composed of 1 PurL, 1 PurQ and 2 PurS subunits.

Its subcellular location is the cytoplasm. It catalyses the reaction N(2)-formyl-N(1)-(5-phospho-beta-D-ribosyl)glycinamide + L-glutamine + ATP + H2O = 2-formamido-N(1)-(5-O-phospho-beta-D-ribosyl)acetamidine + L-glutamate + ADP + phosphate + H(+). Its pathway is purine metabolism; IMP biosynthesis via de novo pathway; 5-amino-1-(5-phospho-D-ribosyl)imidazole from N(2)-formyl-N(1)-(5-phospho-D-ribosyl)glycinamide: step 1/2. In terms of biological role, part of the phosphoribosylformylglycinamidine synthase complex involved in the purines biosynthetic pathway. Catalyzes the ATP-dependent conversion of formylglycinamide ribonucleotide (FGAR) and glutamine to yield formylglycinamidine ribonucleotide (FGAM) and glutamate. The FGAM synthase complex is composed of three subunits. PurQ produces an ammonia molecule by converting glutamine to glutamate. PurL transfers the ammonia molecule to FGAR to form FGAM in an ATP-dependent manner. PurS interacts with PurQ and PurL and is thought to assist in the transfer of the ammonia molecule from PurQ to PurL. The polypeptide is Phosphoribosylformylglycinamidine synthase subunit PurL (Rhizobium meliloti (strain 1021) (Ensifer meliloti)).